A 140-amino-acid polypeptide reads, in one-letter code: MGAPALPQIWQLYLKNYRIATFKNWPFLEDCACTPERMAEAGFIHCPTENEPDLAQCFFCFKELEGWEPDDNPIEEHRKHSPGCAFLTVKKQMEELTVSEFLKLDRQRAKNKIAKETNNKQKEFEETAKTTRQSIEQLAA.

Residues 18 to 88 (RIATFKNWPF…KHSPGCAFLT (71 aa)) form a BIR repeat. Position 23 is an N6-acetyllysine (K23). Phosphothreonine; by CDK1 and CDK15 is present on T34. T48 is modified (phosphothreonine). Zn(2+)-binding residues include C57, C60, E76, H77, H80, and C84. 4 positions are modified to N6-acetyllysine: K90, K110, K112, and K115. Positions 113–129 (IAKETNNKQKEFEETAK) are enriched in basic and acidic residues. A disordered region spans residues 113–140 (IAKETNNKQKEFEETAKTTRQSIEQLAA). T117 is subject to Phosphothreonine; by AURKB. K129 bears the N6-acetyllysine mark. A compositionally biased stretch (polar residues) spans 130–140 (TTRQSIEQLAA).

Belongs to the IAP family. In terms of assembly, monomer or homodimer. Exists as a homodimer in the apo state and as a monomer in the CPC-bound state. The monomer protects cells against apoptosis more efficiently than the dimer. Only the dimeric form is capable of enhancing tubulin stability in cells. When phosphorylated, interacts with LAMTOR5/HBXIP; the resulting complex binds pro-CASP9, as well as active CASP9, but much less efficiently. Component of the chromosomal passenger complex (CPC) composed of at least BIRC5/survivin, CDCA8/borealin, INCENP, AURKB or AURKC; in the complex forms a triple-helix bundle-based subcomplex with INCENP and CDCA8. Interacts with JTB. Interacts (via BIR domain) with histone H3 phosphorylated at 'Thr-3' (H3pT3). Interacts with EVI5. Interacts with GTP-bound RAN in both the S and M phases of the cell cycle. Interacts with USP9X. Interacts with tubulin. Interacts with BIRC2/c-IAP1. The acetylated form at Lys-129 interacts with STAT3. The monomeric form deacetylated at Lys-129 interacts with XPO1/CRM1. The monomeric form interacts with XIAP/BIRC4. Both the dimeric and monomeric form can interact with DIABLO/SMAC. Interacts with BIRC6/bruce. Interacts with FBXL7; this interaction facilitates the polyubiquitination and subsequent proteasomal degradation of BIRC5 by the SCF(FBXL7) E3 ubiquitin-protein ligase complex. Post-translationally, ubiquitinated by the Cul9-RING ubiquitin-protein ligase complex, leading to its degradation. Ubiquitination is required for centrosomal targeting. Deubiquitinated by USP35 or USP38; leading to stabilization. Acetylation at Lys-129 results in its homodimerization, while deacetylation promotes the formation of monomers which heterodimerize with XPO1/CRM1 which facilitates its nuclear export. The acetylated form represses STAT3 transactivation. The dynamic equilibrium between its acetylation and deacetylation at Lys-129 determines its interaction with XPO1/CRM1, its subsequent subcellular localization, and its ability to inhibit STAT3 transactivation. In terms of processing, in vitro phosphorylation at Thr-117 by AURKB prevents interaction with INCENP and localization to mitotic chromosomes. Phosphorylation at Thr-48 by CK2 is critical for its mitotic and anti-apoptotic activities. Phosphorylation at Thr-34 by CDK15 is critical for its anti-apoptotic activity.

It is found in the cytoplasm. The protein resides in the nucleus. Its subcellular location is the chromosome. The protein localises to the centromere. It localises to the cytoskeleton. It is found in the spindle. The protein resides in the kinetochore. Its subcellular location is the midbody. Its function is as follows. Multitasking protein that has dual roles in promoting cell proliferation and preventing apoptosis. Component of a chromosome passage protein complex (CPC) which is essential for chromosome alignment and segregation during mitosis and cytokinesis. Acts as an important regulator of the localization of this complex; directs CPC movement to different locations from the inner centromere during prometaphase to midbody during cytokinesis and participates in the organization of the center spindle by associating with polymerized microtubules. Involved in the recruitment of CPC to centromeres during early mitosis via association with histone H3 phosphorylated at 'Thr-3' (H3pT3) during mitosis. The complex with RAN plays a role in mitotic spindle formation by serving as a physical scaffold to help deliver the RAN effector molecule TPX2 to microtubules. May counteract a default induction of apoptosis in G2/M phase. The acetylated form represses STAT3 transactivation of target gene promoters. May play a role in neoplasia. Inhibitor of CASP3 and CASP7. Essential for the maintenance of mitochondrial integrity and function. In Mus musculus (Mouse), this protein is Baculoviral IAP repeat-containing protein 5 (Birc5).